Here is a 122-residue protein sequence, read N- to C-terminus: MIQTESMLDVADNSGAKRVQCIKVLGGSHRRYAAIGDIIKVTVKEAIPRGRVKKGQVLNAVVVRTRKGVRRSDGSVIRFDVNSAVLLNASGQPIGTRIFGPVTRELRTEQFMKIVSLAPEVL.

It belongs to the universal ribosomal protein uL14 family. In terms of assembly, part of the 50S ribosomal subunit. Forms a cluster with proteins L3 and L19. In the 70S ribosome, L14 and L19 interact and together make contacts with the 16S rRNA in bridges B5 and B8.

Binds to 23S rRNA. Forms part of two intersubunit bridges in the 70S ribosome. The protein is Large ribosomal subunit protein uL14 of Marinomonas sp. (strain MWYL1).